A 509-amino-acid polypeptide reads, in one-letter code: Maturase K (509 aa).

This sequence belongs to the intron maturase 2 family. MatK subfamily.

Its subcellular location is the plastid. The protein localises to the chloroplast. In terms of biological role, usually encoded in the trnK tRNA gene intron. Probably assists in splicing its own and other chloroplast group II introns. This chain is Maturase K, found in Clematis ligusticifolia (Western white clematis).